The following is a 283-amino-acid chain: Para-Rep C7 (283 aa).

A CRESS-DNA virus Rep endonuclease domain is found at 3 to 96; sequence SIRATHWCFT…IAGPWEYGTW (94 aa). Residues 10-13 carry the RCR-1 motif; that stretch reads CFTL. Residues glutamate 36 and histidine 42 each contribute to the a divalent metal cation site. The short motif at 42 to 44 is the RCR-2 element; the sequence is HLQ. The short motif at 51–71 is the Nuclear localization signal element; the sequence is KHVTLKKMKELLPGAHLEMAK. The active-site For DNA cleavage activity is tyrosine 79. The RCR-3 motif lies at 79–82; that stretch reads YCQK. Glutamate 84 is a binding site for a divalent metal cation. Residues 96–102 carry the Nuclear localization signal motif; the sequence is WISSGSH. 178–180 contacts ATP; sequence GKS.

This sequence belongs to the nanoviridea/circoviridae replication-associated protein family. As to quaternary structure, homooligomer (Potential). Rep binds to repeated DNA motifs (iterons). Requires Mg(2+) as cofactor. Mn(2+) serves as cofactor.

Its subcellular location is the host nucleus. It carries out the reaction ATP + H2O = ADP + phosphate + H(+). Functionally, initiates and terminates the replication only of its own subviral DNA molecule. The closed circular ssDNA genome is first converted to a superhelical dsDNA. Rep binds a specific hairpin at the genome origin of replication. Introduces an endonucleolytic nick within the intergenic region of the genome, thereby initiating the rolling circle replication (RCR). Following cleavage, binds covalently to the 5'-phosphate of DNA as a tyrosyl ester. The cleavage gives rise to a free 3'-OH that serves as a primer for the cellular DNA polymerase. The polymerase synthesizes the (+) strand DNA by rolling circle mechanism. After one round of replication, a Rep-catalyzed nucleotidyl transfer reaction releases a circular single-stranded virus genome, thereby terminating the replication. Displays origin-specific DNA cleavage, nucleotidyl transferase, ATPase and helicase activities. In Faba bean necrotic yellows C7 alphasatellite (FBNYC7A), this protein is Para-Rep C7 (C7).